Reading from the N-terminus, the 352-residue chain is Mitochondrial adenine nucleotide transporter ADNT1 (352 aa).

Solcar repeat units lie at residues 36–123 (KSIC…ASNG), 139–227 (LTPL…LKDW), and 242–343 (LTVV…VKDV). Transmembrane regions (helical) follow at residues 41–61 (SLFAGGVAGGVSRTAVAPLER), 100–120 (GTNCARIVPNSAVKFFSYEQA), 145–162 (LGAGATAGIIAMSATYPM), 202–221 (GWLPSVIGVVPYVGLNFSVY), 242–263 (LTVVTRLTCGAIAGTVGQTIAY), and 324–340 (VKVVPSIAIAFVTYEMV).

Belongs to the mitochondrial carrier (TC 2.A.29) family. Expressed in seedling radicles and roots, vasculature of cotyledons, leaf primordia, leaves and sepals.

The protein resides in the mitochondrion inner membrane. Inhibited by pyridoxal 5-phosphate, bathophenanthroline, mersalyl, p-hydroxymercuribenzoate and tannic acid. In terms of biological role, mitochondrial adenylate carrier that catalyzes specifically the transport of ATP, ADP and AMP by a counter-exchange mechanism across the inner mitochondrial membrane. Substrate preference in reconstituted proteoliposomes is ATP &gt; AMP &gt; ADP. May play a role in oxidative phosphorylation and be important for the provision of energy required to support growth in heterotrophic tissues. The polypeptide is Mitochondrial adenine nucleotide transporter ADNT1 (ADNT1) (Arabidopsis thaliana (Mouse-ear cress)).